A 186-amino-acid polypeptide reads, in one-letter code: Ribosome-recycling factor (186 aa).

This sequence belongs to the RRF family.

It localises to the cytoplasm. Its function is as follows. Responsible for the release of ribosomes from messenger RNA at the termination of protein biosynthesis. May increase the efficiency of translation by recycling ribosomes from one round of translation to another. The protein is Ribosome-recycling factor of Chlorobaculum parvum (strain DSM 263 / NCIMB 8327) (Chlorobium vibrioforme subsp. thiosulfatophilum).